We begin with the raw amino-acid sequence, 127 residues long: Large ribosomal subunit protein bL20 (127 aa).

Belongs to the bacterial ribosomal protein bL20 family.

In terms of biological role, binds directly to 23S ribosomal RNA and is necessary for the in vitro assembly process of the 50S ribosomal subunit. It is not involved in the protein synthesizing functions of that subunit. This is Large ribosomal subunit protein bL20 from Bifidobacterium animalis subsp. lactis (strain AD011).